The sequence spans 390 residues: Succinate--CoA ligase [ADP-forming] subunit beta (390 aa).

The region spanning 9–244 (KEILKRYGVN…ETQTDTSENE (236 aa)) is the ATP-grasp domain. Residues Lys46, 53-55 (GRG), Glu99, Leu102, and Glu107 contribute to the ATP site. Positions 199 and 213 each coordinate Mg(2+). Substrate is bound by residues Asn264 and 321–323 (GIV).

The protein belongs to the succinate/malate CoA ligase beta subunit family. As to quaternary structure, heterotetramer of two alpha and two beta subunits. It depends on Mg(2+) as a cofactor.

It carries out the reaction succinate + ATP + CoA = succinyl-CoA + ADP + phosphate. The catalysed reaction is GTP + succinate + CoA = succinyl-CoA + GDP + phosphate. It functions in the pathway carbohydrate metabolism; tricarboxylic acid cycle; succinate from succinyl-CoA (ligase route): step 1/1. Its function is as follows. Succinyl-CoA synthetase functions in the citric acid cycle (TCA), coupling the hydrolysis of succinyl-CoA to the synthesis of either ATP or GTP and thus represents the only step of substrate-level phosphorylation in the TCA. The beta subunit provides nucleotide specificity of the enzyme and binds the substrate succinate, while the binding sites for coenzyme A and phosphate are found in the alpha subunit. The polypeptide is Succinate--CoA ligase [ADP-forming] subunit beta (Campylobacter curvus (strain 525.92)).